The chain runs to 732 residues: Catalase-peroxidase (732 aa).

The disordered stretch occupies residues 1–26; sequence MDAKTDDQGGKCPFPHGGGSRGHRNR. Positions 97–219 form a cross-link, tryptophyl-tyrosyl-methioninium (Trp-Tyr) (with M-245); the sequence is WHSAGTYRTT…LGAVQMGLIY (123 aa). Residue His98 is the Proton acceptor of the active site. The segment at residues 219 to 245 is a cross-link (tryptophyl-tyrosyl-methioninium (Tyr-Met) (with W-97)); sequence YVNPEGPNGNPDPVAAAKDIRETFARM. Residue His260 participates in heme b binding.

It belongs to the peroxidase family. Peroxidase/catalase subfamily. As to quaternary structure, homodimer or homotetramer. It depends on heme b as a cofactor. In terms of processing, formation of the three residue Trp-Tyr-Met cross-link is important for the catalase, but not the peroxidase activity of the enzyme.

The enzyme catalyses H2O2 + AH2 = A + 2 H2O. The catalysed reaction is 2 H2O2 = O2 + 2 H2O. Functionally, bifunctional enzyme with both catalase and broad-spectrum peroxidase activity. The sequence is that of Catalase-peroxidase from Rhodopseudomonas palustris (strain BisB5).